The following is a 417-amino-acid chain: Calreticulin (417 aa).

The first 17 residues, 1–17 (MLLSVPLLLGLLGLAAA), serve as a signal peptide directing secretion. The N-domain stretch occupies residues 18-197 (EPAVYFKEQF…NSQVESGSLE (180 aa)). Gln-26 lines the Ca(2+) pocket. At Lys-48 the chain carries N6-acetyllysine. Ca(2+) is bound by residues Lys-62 and Lys-64. Lys-64 bears the N6-(2-hydroxyisobutyryl)lysine mark. Cys-105 and Cys-137 are disulfide-bonded. Residues Tyr-109, Lys-111, Tyr-128, and Asp-135 each coordinate an alpha-D-glucoside. The residue at position 159 (Lys-159) is an N6-acetyllysine. Residues 191 to 202 (VESGSLEDDWDF) form a 1-1 repeat. Residues 191–255 (VESGSLEDDW…DAKKPEDWDE (65 aa)) form a 4 X approximate repeats region. A disordered region spans residues 193–277 (SGSLEDDWDF…NPEYKGEWKP (85 aa)). A P-domain region spans residues 198–308 (DDWDFLPPKK…YSPDANIYAY (111 aa)). The segment covering 207 to 251 (KIKDPDAAKPEDWDERAKIDDPTDSKPEDWDKPEHIPDPDAKKPE) has biased composition (basic and acidic residues). At Lys-209 the chain carries N6-acetyllysine. 6 repeat units span residues 210–221 (DPDAAKPEDWDE), 227–238 (DPTDSKPEDWDK), 244–255 (DPDAKKPEDWDE), 259–269 (GEWEPPVIQNP), 273–283 (GEWKPRQIDNP), and 287–297 (GTWIHPEIDNP). The interval 237-270 (DKPEHIPDPDAKKPEDWDEEMDGEWEPPVIQNPE) is interaction with PPIB. The segment covering 252 to 261 (DWDEEMDGEW) has biased composition (acidic residues). Residues 259 to 297 (GEWEPPVIQNPEYKGEWKPRQIDNPDYKGTWIHPEIDNP) are 3 X approximate repeats. Residues 309-417 (DSFAVLGLDL…TTPGQTKDEL (109 aa)) are C-domain. Asp-317 provides a ligand contact to an alpha-D-glucoside. Ca(2+) is bound at residue Asp-328. The segment at 350-417 (TKASEKQMKD…TTPGQTKDEL (68 aa)) is disordered. A compositionally biased stretch (basic and acidic residues) spans 352–379 (ASEKQMKDKQDEEQRLKEEEEDKKRKEE). Over residues 380 to 408 (EEAEDKEDEDDRDEDEEDEDEKEEDEEDT) the composition is skewed to acidic residues. The Prevents secretion from ER motif lies at 414–417 (KDEL).

This sequence belongs to the calreticulin family. As to quaternary structure, monomer. Component of an EIF2 complex at least composed of CELF1/CUGBP1, CALR, CALR3, EIF2S1, EIF2S2, HSP90B1 and HSPA5. Interacts with PDIA3/ERp57 and SPACA9. Interacts with TRIM21. Interacts with NR3C1. Interacts with PPIB. Interacts (via P-domain) with PDIA5. Interacts with GABARAP. Interacts with CLCC1.

The protein localises to the endoplasmic reticulum lumen. It is found in the cytoplasm. The protein resides in the cytosol. It localises to the cytolytic granule. Its subcellular location is the secreted. The protein localises to the extracellular space. It is found in the extracellular matrix. The protein resides in the cell surface. It localises to the sarcoplasmic reticulum lumen. Its subcellular location is the cytoplasmic vesicle. The protein localises to the secretory vesicle. It is found in the cortical granule. In terms of biological role, calcium-binding chaperone that promotes folding, oligomeric assembly and quality control in the endoplasmic reticulum (ER) via the calreticulin/calnexin cycle. This lectin interacts transiently with almost all of the monoglucosylated glycoproteins that are synthesized in the ER. Interacts with the DNA-binding domain of NR3C1 and mediates its nuclear export. Involved in maternal gene expression regulation. May participate in oocyte maturation via the regulation of calcium homeostasis. Present in the cortical granules of non-activated oocytes, is exocytosed during the cortical reaction in response to oocyte activation and might participate in the block to polyspermy. This Cricetulus griseus (Chinese hamster) protein is Calreticulin (CALR).